The primary structure comprises 113 residues: Protein NATD1 (113 aa).

Residues 22–112 (EHDRRRRQFT…PLPQYLERLQ (91 aa)) enclose the N-acetyltransferase domain.

This sequence belongs to the NATD1 family.

The sequence is that of Protein NATD1 (NATD1) from Homo sapiens (Human).